The primary structure comprises 302 residues: Bifunctional protein FolD (302 aa).

Residues 165–167 (GRS), serine 190, and isoleucine 231 each bind NADP(+).

The protein belongs to the tetrahydrofolate dehydrogenase/cyclohydrolase family. In terms of assembly, homodimer.

It carries out the reaction (6R)-5,10-methylene-5,6,7,8-tetrahydrofolate + NADP(+) = (6R)-5,10-methenyltetrahydrofolate + NADPH. It catalyses the reaction (6R)-5,10-methenyltetrahydrofolate + H2O = (6R)-10-formyltetrahydrofolate + H(+). Its pathway is one-carbon metabolism; tetrahydrofolate interconversion. Functionally, catalyzes the oxidation of 5,10-methylenetetrahydrofolate to 5,10-methenyltetrahydrofolate and then the hydrolysis of 5,10-methenyltetrahydrofolate to 10-formyltetrahydrofolate. In Prochlorococcus marinus (strain MIT 9211), this protein is Bifunctional protein FolD.